Reading from the N-terminus, the 159-residue chain is Ribosomal RNA large subunit methyltransferase H (159 aa).

S-adenosyl-L-methionine-binding positions include Leu76, Gly108, and 127 to 132 (FGQLTL).

Belongs to the RNA methyltransferase RlmH family. In terms of assembly, homodimer.

It is found in the cytoplasm. It catalyses the reaction pseudouridine(1915) in 23S rRNA + S-adenosyl-L-methionine = N(3)-methylpseudouridine(1915) in 23S rRNA + S-adenosyl-L-homocysteine + H(+). In terms of biological role, specifically methylates the pseudouridine at position 1915 (m3Psi1915) in 23S rRNA. This chain is Ribosomal RNA large subunit methyltransferase H, found in Streptococcus gordonii (strain Challis / ATCC 35105 / BCRC 15272 / CH1 / DL1 / V288).